The chain runs to 121 residues: Cell division protein FtsL (121 aa).

Residues M1–R34 are Cytoplasmic-facing. A helical transmembrane segment spans residues F35 to A57. The Periplasmic segment spans residues H58–K121.

This sequence belongs to the FtsL family. As to quaternary structure, part of a complex composed of FtsB, FtsL and FtsQ.

It localises to the cell inner membrane. Essential cell division protein. May link together the upstream cell division proteins, which are predominantly cytoplasmic, with the downstream cell division proteins, which are predominantly periplasmic. The protein is Cell division protein FtsL of Shigella dysenteriae serotype 1 (strain Sd197).